A 30-amino-acid chain; its full sequence is Rothein 3.3 (30 aa).

A Leucine amide modification is found at leucine 30.

As to expression, expressed by the skin dorsal glands.

Its subcellular location is the secreted. In terms of biological role, lacks antimicrobial activity. Does not inhibit the formation of NO by neuronal nitric oxide. This chain is Rothein 3.3, found in Litoria rothii (Roth's tree frog).